The primary structure comprises 473 residues: FAD-dependent urate hydroxylase (473 aa).

The protein belongs to the HpyO family. Homodimer. Requires FAD as cofactor.

The enzyme catalyses urate + NADH + O2 + H(+) = 5-hydroxyisourate + NAD(+) + H2O. It carries out the reaction urate + NADPH + O2 + H(+) = 5-hydroxyisourate + NADP(+) + H2O. The protein operates within purine metabolism; urate degradation. Catalyzes the hydroxylation of urate to 5-hydroxyisourate (HIU). Is likely to be involved in the urate degradation pathway to allantoin. Is slightly more efficient (about 2.6 times) with NADPH than NADH as the electron donor. In Xanthomonas campestris pv. campestris (strain ATCC 33913 / DSM 3586 / NCPPB 528 / LMG 568 / P 25), this protein is FAD-dependent urate hydroxylase.